We begin with the raw amino-acid sequence, 150 residues long: Arginine repressor (150 aa).

Belongs to the ArgR family.

The protein resides in the cytoplasm. Its pathway is amino-acid biosynthesis; L-arginine biosynthesis [regulation]. Functionally, regulates arginine biosynthesis genes. The protein is Arginine repressor of Staphylococcus aureus (strain Mu3 / ATCC 700698).